Here is a 483-residue protein sequence, read N- to C-terminus: uncharacterized protein (483 aa).

A WD repeat occupies isoleucine 96–leucine 137.

This is an uncharacterized protein from Schizosaccharomyces pombe (strain 972 / ATCC 24843) (Fission yeast).